The chain runs to 368 residues: Endoglucanase (368 aa).

The first 21 residues, Met1–Ala21, serve as a signal peptide directing secretion. Glu55 functions as the Proton donor in the catalytic mechanism. The active-site Nucleophile is Asp116.

It belongs to the glycosyl hydrolase 8 (cellulase D) family.

It is found in the secreted. The catalysed reaction is Endohydrolysis of (1-&gt;4)-beta-D-glucosidic linkages in cellulose, lichenin and cereal beta-D-glucans.. The protein operates within glycan metabolism; bacterial cellulose biosynthesis. In terms of biological role, hydrolyzes carboxymethylcellulose. The protein is Endoglucanase (bcsZ) of Escherichia coli (strain K12).